The following is a 443-amino-acid chain: Signal recognition particle 54 kDa protein (443 aa).

Residues 104-111 (GLQGSGKT), 184-188 (DTAGR), and 242-245 (TKLD) contribute to the GTP site.

The protein belongs to the GTP-binding SRP family. SRP54 subfamily. In terms of assembly, part of the signal recognition particle protein translocation system, which is composed of SRP and FtsY. Archaeal SRP consists of a 7S RNA molecule of 300 nucleotides and two protein subunits: SRP54 and SRP19.

Its subcellular location is the cytoplasm. It catalyses the reaction GTP + H2O = GDP + phosphate + H(+). Its function is as follows. Involved in targeting and insertion of nascent membrane proteins into the cytoplasmic membrane. Binds to the hydrophobic signal sequence of the ribosome-nascent chain (RNC) as it emerges from the ribosomes. The SRP-RNC complex is then targeted to the cytoplasmic membrane where it interacts with the SRP receptor FtsY. This Methanosarcina mazei (strain ATCC BAA-159 / DSM 3647 / Goe1 / Go1 / JCM 11833 / OCM 88) (Methanosarcina frisia) protein is Signal recognition particle 54 kDa protein.